The chain runs to 429 residues: Phosphoribosylamine--glycine ligase (429 aa).

Positions 109–316 constitute an ATP-grasp domain; sequence KDFLARHNIP…LVELCLAACE (208 aa). Residue 135–196 coordinates ATP; that stretch reads LREKGAPIVI…EEFLDGEEAS (62 aa). The tract at residues 212-236 is disordered; sequence SQDHKRVGDKDTGPNTGGMGAYSPA. The segment covering 213–223 has biased composition (basic and acidic residues); sequence QDHKRVGDKDT. The Mg(2+) site is built by glutamate 286 and asparagine 288.

It belongs to the GARS family. In terms of assembly, monomer. The cofactor is Mg(2+). Mn(2+) is required as a cofactor.

The catalysed reaction is 5-phospho-beta-D-ribosylamine + glycine + ATP = N(1)-(5-phospho-beta-D-ribosyl)glycinamide + ADP + phosphate + H(+). It functions in the pathway purine metabolism; IMP biosynthesis via de novo pathway; N(1)-(5-phospho-D-ribosyl)glycinamide from 5-phospho-alpha-D-ribose 1-diphosphate: step 2/2. The chain is Phosphoribosylamine--glycine ligase from Escherichia coli O6:H1 (strain CFT073 / ATCC 700928 / UPEC).